A 363-amino-acid polypeptide reads, in one-letter code: Molybdenum import ATP-binding protein ModC (363 aa).

The 230-residue stretch at 1-230 folds into the ABC transporter domain; sequence MISARFSGRQ…PNLPLIHRPD (230 aa). Residue 31–38 coordinates ATP; the sequence is GPSGCGKT. Residues 289 to 359 enclose the Mop domain; it reads DTTILNALPA…LKAMALSAPA (71 aa).

The protein belongs to the ABC transporter superfamily. Molybdate importer (TC 3.A.1.8) family. As to quaternary structure, the complex is composed of two ATP-binding proteins (ModC), two transmembrane proteins (ModB) and a solute-binding protein (ModA).

It localises to the cell inner membrane. The enzyme catalyses molybdate(out) + ATP + H2O = molybdate(in) + ADP + phosphate + H(+). In terms of biological role, part of the ABC transporter complex ModABC involved in molybdenum import. Responsible for energy coupling to the transport system. The polypeptide is Molybdenum import ATP-binding protein ModC (Rhodobacter capsulatus (Rhodopseudomonas capsulata)).